Reading from the N-terminus, the 453-residue chain is Methylenetetrahydrofolate--tRNA-(uracil-5-)-methyltransferase TrmFO (453 aa).

10-15 (GGGLAG) provides a ligand contact to FAD. The interval 433 to 453 (ELAPWIDSAPPTAVPAAPAAG) is disordered. Positions 441 to 453 (APPTAVPAAPAAG) are enriched in low complexity.

Belongs to the MnmG family. TrmFO subfamily. It depends on FAD as a cofactor.

The protein resides in the cytoplasm. It catalyses the reaction uridine(54) in tRNA + (6R)-5,10-methylene-5,6,7,8-tetrahydrofolate + NADH + H(+) = 5-methyluridine(54) in tRNA + (6S)-5,6,7,8-tetrahydrofolate + NAD(+). The enzyme catalyses uridine(54) in tRNA + (6R)-5,10-methylene-5,6,7,8-tetrahydrofolate + NADPH + H(+) = 5-methyluridine(54) in tRNA + (6S)-5,6,7,8-tetrahydrofolate + NADP(+). Catalyzes the folate-dependent formation of 5-methyl-uridine at position 54 (M-5-U54) in all tRNAs. This Anaeromyxobacter dehalogenans (strain 2CP-1 / ATCC BAA-258) protein is Methylenetetrahydrofolate--tRNA-(uracil-5-)-methyltransferase TrmFO.